A 258-amino-acid polypeptide reads, in one-letter code: Ribosomal RNA small subunit methyltransferase A (258 aa).

The S-adenosyl-L-methionine site is built by His-13, Leu-15, Gly-40, Glu-61, Asp-86, and Asn-106.

It belongs to the class I-like SAM-binding methyltransferase superfamily. rRNA adenine N(6)-methyltransferase family. RsmA subfamily.

It localises to the cytoplasm. It catalyses the reaction adenosine(1518)/adenosine(1519) in 16S rRNA + 4 S-adenosyl-L-methionine = N(6)-dimethyladenosine(1518)/N(6)-dimethyladenosine(1519) in 16S rRNA + 4 S-adenosyl-L-homocysteine + 4 H(+). Its function is as follows. Specifically dimethylates two adjacent adenosines (A1518 and A1519) in the loop of a conserved hairpin near the 3'-end of 16S rRNA in the 30S particle. May play a critical role in biogenesis of 30S subunits. This chain is Ribosomal RNA small subunit methyltransferase A, found in Coxiella burnetii (strain CbuG_Q212) (Coxiella burnetii (strain Q212)).